The primary structure comprises 818 residues: Phosphoenolpyruvate synthase (818 aa).

Catalysis depends on His442, which acts as the Tele-phosphohistidine intermediate. Substrate contacts are provided by Arg532, Arg601, Glu703, Gly724, Ser725, Asn726, and Asp727. Glu703 serves as a coordination point for Mg(2+). Asp727 is a binding site for Mg(2+). Cys774 (proton donor) is an active-site residue.

It belongs to the PEP-utilizing enzyme family. It depends on Mg(2+) as a cofactor.

It catalyses the reaction pyruvate + ATP + H2O = phosphoenolpyruvate + AMP + phosphate + 2 H(+). The protein operates within carbohydrate biosynthesis; gluconeogenesis. Functionally, catalyzes the phosphorylation of pyruvate to phosphoenolpyruvate. The protein is Phosphoenolpyruvate synthase (ppsA) of Synechocystis sp. (strain ATCC 27184 / PCC 6803 / Kazusa).